The following is a 288-amino-acid chain: 4-hydroxybenzoate octaprenyltransferase (288 aa).

A run of 8 helical transmembrane segments spans residues 23 to 43, 46 to 66, 98 to 118, 141 to 161, 163 to 183, 213 to 233, 234 to 254, and 268 to 288; these read IGSL…GRGI, AKIL…GCVV, ILFV…NSMT, LPQV…FAAV, ESLP…TVAY, LIIG…GWLM, NLGG…THQQ, and AFLN…ISYW.

It belongs to the UbiA prenyltransferase family. The cofactor is Mg(2+).

The protein resides in the cell inner membrane. The enzyme catalyses all-trans-octaprenyl diphosphate + 4-hydroxybenzoate = 4-hydroxy-3-(all-trans-octaprenyl)benzoate + diphosphate. The protein operates within cofactor biosynthesis; ubiquinone biosynthesis. Its function is as follows. Catalyzes the prenylation of para-hydroxybenzoate (PHB) with an all-trans polyprenyl group. Mediates the second step in the final reaction sequence of ubiquinone-8 (UQ-8) biosynthesis, which is the condensation of the polyisoprenoid side chain with PHB, generating the first membrane-bound Q intermediate 3-octaprenyl-4-hydroxybenzoate. This Yersinia pestis bv. Antiqua (strain Antiqua) protein is 4-hydroxybenzoate octaprenyltransferase.